Here is a 189-residue protein sequence, read N- to C-terminus: Keratin-associated protein 5-2 (189 aa).

Repeat copies occupy residues 21 to 24 (CCKP), 27 to 30 (CCKP), 33 to 36 (CCVP), 134 to 137 (CCKP), 144 to 147 (CCKP), 159 to 162 (CCKP), 169 to 172 (CCKP), and 179 to 182 (CCAP). An 8 X 4 AA repeats of C-C-X-P region spans residues 27–182 (CCKPVCCCVP…CCCQSSCCAP (156 aa)).

The protein belongs to the KRTAP type 5 family. As to quaternary structure, interacts with hair keratins.

Its function is as follows. In the hair cortex, hair keratin intermediate filaments are embedded in an interfilamentous matrix, consisting of hair keratin-associated protein (KRTAP), which are essential for the formation of a rigid and resistant hair shaft through their extensive disulfide bond cross-linking with abundant cysteine residues of hair keratins. The matrix proteins include the high-sulfur and high-glycine-tyrosine keratins. In Mus musculus (Mouse), this protein is Keratin-associated protein 5-2.